Here is a 607-residue protein sequence, read N- to C-terminus: Glutamine--fructose-6-phosphate aminotransferase [isomerizing] (607 aa).

Residue cysteine 2 is the Nucleophile; for GATase activity of the active site. The 216-residue stretch at 2 to 217 (CGIIGILGKR…DGDWAVLTRE (216 aa)) folds into the Glutamine amidotransferase type-2 domain. 2 SIS domains span residues 277-422 (TVRS…QRGF) and 455-597 (ICRN…VDQP). The active-site For Fru-6P isomerization activity is the lysine 602.

Homodimer.

It localises to the cytoplasm. The enzyme catalyses D-fructose 6-phosphate + L-glutamine = D-glucosamine 6-phosphate + L-glutamate. Functionally, catalyzes the first step in hexosamine metabolism, converting fructose-6P into glucosamine-6P using glutamine as a nitrogen source. This chain is Glutamine--fructose-6-phosphate aminotransferase [isomerizing], found in Bartonella henselae (strain ATCC 49882 / DSM 28221 / CCUG 30454 / Houston 1) (Rochalimaea henselae).